The following is a 470-amino-acid chain: Iron-sulfur cluster assembly SufBD family protein ABCI9 (470 aa).

Belongs to the iron-sulfur cluster assembly SufBD family.

In Arabidopsis thaliana (Mouse-ear cress), this protein is Iron-sulfur cluster assembly SufBD family protein ABCI9 (ABCI9).